The following is a 527-amino-acid chain: Probable feruloyl esterase B-2 (527 aa).

Residues 1 to 19 (MAPIHYLLPIITLGSAALA) form the signal peptide. Disulfide bonds link C28–C75 and C63–C114. Residues N53, N85, N98, N138, and N180 are each glycosylated (N-linked (GlcNAc...) asparagine). Disulfide bonds link C187–C441, C256–C273, C282–C291, and C503–C525. S188 serves as the catalytic Acyl-ester intermediate. 5 residues coordinate Ca(2+): D257, D260, A262, D264, and I266. N-linked (GlcNAc...) asparagine glycosylation is found at N311 and N355. Active-site charge relay system residues include D400 and H440. N516 carries N-linked (GlcNAc...) asparagine glycosylation.

This sequence belongs to the tannase family.

It localises to the secreted. It carries out the reaction feruloyl-polysaccharide + H2O = ferulate + polysaccharide.. Its function is as follows. Involved in degradation of plant cell walls. Hydrolyzes the feruloyl-arabinose ester bond in arabinoxylans as well as the feruloyl-galactose and feruloyl-arabinose ester bonds in pectin. The sequence is that of Probable feruloyl esterase B-2 (faeB-2) from Aspergillus terreus (strain NIH 2624 / FGSC A1156).